Here is a 122-residue protein sequence, read N- to C-terminus: Large ribosomal subunit protein uL14 (122 aa).

The protein belongs to the universal ribosomal protein uL14 family. In terms of assembly, part of the 50S ribosomal subunit. Forms a cluster with proteins L3 and L19. In the 70S ribosome, L14 and L19 interact and together make contacts with the 16S rRNA in bridges B5 and B8.

Binds to 23S rRNA. Forms part of two intersubunit bridges in the 70S ribosome. The polypeptide is Large ribosomal subunit protein uL14 (Chlorobium phaeobacteroides (strain BS1)).